Reading from the N-terminus, the 349-residue chain is MHRNFRKWIFYVFLCFGVLYVKLGALSSVVALGANIICNKIPGLAPRQRAICQSRPDAIIVIGEGAQMGINECQYQFRFGRWNCSALGEKTVFGQELRVGSREAAFTYAITAAGVAHAVTAACSQGNLSNCGCDREKQGYYNQAEGWKWGGCSADVRYGIDFSRRFVDAREIKKNARRLMNLHNNEAGRKVLEDRMQLECKCHGVSGSCTTKTCWTTLPKFREVGHLLKEKYNAAVQVEVVRASRLRQPTFLRIKQLRSYQKPMETDLVYIEKSPNYCEEDAATGSVGTQGRLCNRTSPGADGCDTMCCGRGYNTHQYTKVWQCNCKFHWCCFVKCNTCSERTEVFTCK.

Residues methionine 1–glycine 24 form the signal peptide. Cystine bridges form between cysteine 73–cysteine 84, cysteine 123–cysteine 131, cysteine 133–cysteine 152, cysteine 200–cysteine 214, and cysteine 202–cysteine 209. Asparagine 83 and asparagine 127 each carry an N-linked (GlcNAc...) asparagine glycan. Serine 206 carries O-palmitoleoyl serine; by PORCN lipidation. The segment at valine 238–threonine 266 is disordered linker. 6 disulfide bridges follow: cysteine 278/cysteine 309, cysteine 294/cysteine 304, cysteine 308/cysteine 348, cysteine 324/cysteine 339, cysteine 326/cysteine 336, and cysteine 331/cysteine 332. N-linked (GlcNAc...) asparagine glycosylation occurs at asparagine 295.

Belongs to the Wnt family. As to quaternary structure, forms a soluble 1:1 complex with AFM; this prevents oligomerization and is required for prolonged biological activity. The complex with AFM may represent the physiological form in body fluids. Interacts with FZD1 and FZD10. Interacts with FZD4 (in vitro). Interacts with PORCN. Interacts with glypican GPC3. Interacts (via intrinsically disordered linker region) with RECK; interaction with RECK confers ligand selectivity for Wnt7 in brain endothelial cells and allows these cells to selectively respond to Wnt7. In terms of processing, palmitoleoylation is required for efficient binding to frizzled receptors. Depalmitoleoylation leads to Wnt signaling pathway inhibition. As to expression, moderately expressed in fetal brain, weakly expressed in fetal lung and kidney, and faintly expressed in adult brain, lung and prostate.

The protein localises to the secreted. It localises to the extracellular space. It is found in the extracellular matrix. Functionally, ligand for members of the frizzled family of seven transmembrane receptors that functions in the canonical Wnt/beta-catenin signaling pathway. Required for normal fusion of the chorion and the allantois during placenta development. Required for central nervous system (CNS) angiogenesis and blood-brain barrier regulation. The protein is Protein Wnt-7b (WNT7B) of Homo sapiens (Human).